Consider the following 134-residue polypeptide: Profilin-3 (134 aa).

A disulfide bridge connects residues Cys-13 and Cys-118. Positions 84-100 (AVIRGKKGSGGITIKKT) match the Involved in PIP2 interaction motif. At Thr-114 the chain carries Phosphothreonine.

The protein belongs to the profilin family. Occurs in many kinds of cells as a complex with monomeric actin in a 1:1 ratio. In terms of processing, phosphorylated by MAP kinases.

It is found in the cytoplasm. Its subcellular location is the cytoskeleton. Its function is as follows. Binds to actin and affects the structure of the cytoskeleton. At high concentrations, profilin prevents the polymerization of actin, whereas it enhances it at low concentrations. In Olea europaea (Common olive), this protein is Profilin-3.